Here is a 561-residue protein sequence, read N- to C-terminus: Sesquiterpene synthase 2 (561 aa).

Mg(2+)-binding residues include Asp-313, Asp-317, Asp-458, and Glu-466. The short motif at 313-317 (DDIYD) is the DDXXD motif element.

This sequence belongs to the terpene synthase family. Tpsa subfamily. The cofactor is Mn(2+). Mg(2+) is required as a cofactor.

It is found in the cytoplasm. The enzyme catalyses (2E,6E)-farnesyl diphosphate + H2O = kunzeaol + diphosphate. It participates in secondary metabolite biosynthesis; terpenoid biosynthesis. Functionally, involved in the biosynthesis of kunzeaol. Produces mainly (-)-germacrene D along with gamma-cadinene. The polypeptide is Sesquiterpene synthase 2 (STS2) (Thapsia garganica (Deadly carrot)).